A 128-amino-acid polypeptide reads, in one-letter code: uncharacterized protein (128 aa).

The protein resides in the mitochondrion. This is an uncharacterized protein from Schizosaccharomyces pombe (strain 972 / ATCC 24843) (Fission yeast).